The following is a 317-amino-acid chain: Beta-ketoacyl-[acyl-carrier-protein] synthase III (317 aa).

Active-site residues include cysteine 112 and histidine 244. The ACP-binding stretch occupies residues 245-249; the sequence is QANIR. The active site involves asparagine 274.

It belongs to the thiolase-like superfamily. FabH family. Homodimer.

It is found in the cytoplasm. The catalysed reaction is malonyl-[ACP] + acetyl-CoA + H(+) = 3-oxobutanoyl-[ACP] + CO2 + CoA. The protein operates within lipid metabolism; fatty acid biosynthesis. Catalyzes the condensation reaction of fatty acid synthesis by the addition to an acyl acceptor of two carbons from malonyl-ACP. Catalyzes the first condensation reaction which initiates fatty acid synthesis and may therefore play a role in governing the total rate of fatty acid production. Possesses both acetoacetyl-ACP synthase and acetyl transacylase activities. Its substrate specificity determines the biosynthesis of branched-chain and/or straight-chain of fatty acids. The sequence is that of Beta-ketoacyl-[acyl-carrier-protein] synthase III from Rickettsia akari (strain Hartford).